The following is a 186-amino-acid chain: Transposons Tn1721 resolvase (186 aa).

Positions 4 to 137 constitute a Resolvase/invertase-type recombinase catalytic domain; that stretch reads HRIGYVRVSS…EGIALAKQRG (134 aa). Ser-12 acts as the O-(5'-phospho-DNA)-serine intermediate in catalysis. Residues 164 to 183 constitute a DNA-binding region (H-T-H motif); sequence KAQLAREFNISRETLYQYLR.

It belongs to the site-specific recombinase resolvase family.

Functionally, resolvase catalyzes the resolution (a site-specific recombination) of the cointegrated replicon to yield the final transposition products. The chain is Transposons Tn1721 resolvase (tnpR) from Escherichia coli.